The primary structure comprises 2280 residues: Metacaspase-3 (2280 aa).

7 disordered regions span residues 56–83, 202–284, 791–819, 931–954, 994–1015, 1278–1306, and 1469–1500; these read ILSK…DRED, YSTE…THRG, YKNS…MVNN, DDNS…RYDK, SGKY…DDSE, KTNN…NPFI, and KAPT…NANA. Basic and acidic residues predominate over residues 63 to 83; it reads NKNENIKKRINEKDNDTDRED. 2 stretches are compositionally biased toward polar residues: residues 205–219 and 228–278; these read EHTQ…TSKR and DKAQ…NRKG. 2 stretches are compositionally biased toward low complexity: residues 793-819 and 931-941; these read NSMN…MVNN and DDNSVQDSFFS. 2 stretches are compositionally biased toward low complexity: residues 1278 to 1303 and 1482 to 1500; these read KTNN…NNSN and APTN…NANA.

It belongs to the peptidase C14B family.

Functionally, protease that cleaves specifically after arginine or lysine residues. In Plasmodium falciparum (isolate 3D7), this protein is Metacaspase-3.